The chain runs to 256 residues: MIIMDYYHMDIILYPNKNLQKSLTKRKCLKQPNIHSIKRLIFPPITETRLSKIMIDDESIKYITYNSSAQEITNIIMNNLENFPCPSHCSEEKWRLKSPDQRMKKLVITEMTAGVGGNVLNFAKYFKYVNAIELNCIRYKYLNNNIKLYDYSNVNCYNDNSVSLLIEKDDLGQDIVFFDPPWGGGGYKQFQNLRLDFDKYSVEVVCQKLLEKNHNKMVILKLPSNYDFDYFFDQLKSYTINKFDIEKMTIIVVKKY.

This is an uncharacterized protein from Acanthamoeba polyphaga mimivirus (APMV).